The following is a 554-amino-acid chain: Solute carrier family 22 member 1 (554 aa).

Topologically, residues 1 to 21 (MPTVDDILEQVGESGWFQKQA) are cytoplasmic. Residues 22–42 (FLILCLLSAAFAPICVGIVFL) form a helical membrane-spanning segment. At 43 to 149 (GFTPDHHCQS…LVCADSWKLD (107 aa)) the chain is on the extracellular side. N71 is a glycosylation site (N-linked (GlcNAc...) asparagine). A helical membrane pass occupies residues 150-170 (LFQSCLNAGFLFGSLGVGYFA). The Cytoplasmic segment spans residues 171-176 (DRFGRK). The chain crosses the membrane as a helical span at residues 177 to 197 (LCLLGTVLVNAVSGVLMAFSP). Over 198 to 206 (NYMSMLLFR) the chain is Extracellular. The helical transmembrane segment at 207 to 229 (LLQGLVSKGNWMAGYTLITEFVG) threads the bilayer. The Cytoplasmic portion of the chain corresponds to 230–235 (SGSRRT). Residues 236-256 (VAIMYQMAFTVGLVALTGLAY) traverse the membrane as a helical segment. At 257-262 (ALPHWR) the chain is on the extracellular side. The chain crosses the membrane as a helical span at residues 263–283 (WLQLAVSLPTFLFLLYYWCVP). The short motif at 283–287 (PESPR) is the Proline-rich sequence element. Over 284–347 (ESPRWLLSQK…FRTPRLRKRT (64 aa)) the chain is Cytoplasmic. At S333 the chain carries Phosphoserine. Residues 348-368 (FILMYLWFTDSVLYQGLILHM) traverse the membrane as a helical segment. The Extracellular segment spans residues 369–376 (GATSGNLY). A helical membrane pass occupies residues 377–397 (LDFLYSALVEIPGAFIALITI). Residues 398 to 402 (DRVGR) lie on the Cytoplasmic side of the membrane. Residues 403–423 (IYPMAMSNLLAGAACLVMIFI) traverse the membrane as a helical segment. Over 424 to 431 (SPDLHWLN) the chain is Extracellular. Residues 432 to 452 (IIIMCVGRMGITIAIQMICLV) traverse the membrane as a helical segment. The Cytoplasmic portion of the chain corresponds to 453–464 (NAELYPTFVRNL). The helical transmembrane segment at 465-485 (GVMVCSSLCDIGGIITPFIVF) threads the bilayer. The Extracellular portion of the chain corresponds to 486 to 492 (RLREVWQ). The chain crosses the membrane as a helical span at residues 493-513 (ALPLILFAVLGLLAAGVTLLL). At 514-554 (PETKGVALPETMKDAENLGRKAKPKENTIYLKVQTSEPSGT) the chain is on the cytoplasmic side. Phosphothreonine is present on T541.

It belongs to the major facilitator (TC 2.A.1) superfamily. Organic cation transporter (TC 2.A.1.19) family. Post-translationally, phosphorylated. In terms of tissue distribution, widely expressed with high level in liver. In liver, expressed around the central vein. Expressed in kidney. Expressed in small intestine enterocytes. Localized to peritubular myoid cells, Leydig cells and moderately to the basal membrane of Sertoli cells in testes. Expressed in tracheal and bronchial ciliated epithelium in the respiratory tract. Also expressed in skeletal muscle, stomach, spleen, heart, placentacolon, brain, granulycytes and lympohocytes. Expressed in liver and in glial cell lines. As to expression, expressed in glial cell lines. Not expressed in liver.

The protein resides in the basolateral cell membrane. The protein localises to the apical cell membrane. It localises to the lateral cell membrane. It is found in the basal cell membrane. Its subcellular location is the cell membrane. The enzyme catalyses 1-methylnicotinamide(out) = 1-methylnicotinamide(in). The catalysed reaction is dopamine(out) = dopamine(in). It carries out the reaction serotonin(out) = serotonin(in). It catalyses the reaction (R)-adrenaline(out) = (R)-adrenaline(in). The enzyme catalyses histamine(out) = histamine(in). The catalysed reaction is guanidine(out) = guanidine(in). It carries out the reaction acetylcholine(in) = acetylcholine(out). It catalyses the reaction thiamine(in) = thiamine(out). The enzyme catalyses agmatine(out) = agmatine(in). The catalysed reaction is putrescine(out) = putrescine(in). It carries out the reaction spermidine(in) = spermidine(out). It catalyses the reaction L-histidyl-L-proline diketopiperazine(in) = L-histidyl-L-proline diketopiperazine(out). The enzyme catalyses (R)-salsolinol(in) = (R)-salsolinol(out). The catalysed reaction is prostaglandin F2alpha(out) = prostaglandin F2alpha(in). It carries out the reaction prostaglandin E2(out) = prostaglandin E2(in). Its activity is regulated as follows. Phosphorylation of the transporter leads to changes in its substrate affinity, resulting in a regulation of the transport activity. In contrast with rat ortholog, ASP uptake is inhibited by protein kinase A (PKA) and C (PKC) activation. ASP uptake is also endogenously activated by calmodulin, the calmodulin-dependent kinase II and LCK tyrosine kinase. Inhibited by cGMP, most likely through a cGMP-binding protein that interacts with OCT1. Its function is as follows. Electrogenic voltage-dependent transporter that mediates the transport of a variety of organic cations such as endogenous bioactive amines, cationic drugs and xenobiotics. Functions as a pH- and Na(+)-independent, bidirectional transporter. Cation cellular uptake or release is driven by the electrochemical potential (i.e. membrane potential and concentration gradient) and substrate selectivity. Hydrophobicity is a major requirement for recognition in polyvalent substrates and inhibitors. Primarily expressed at the basolateral membrane of hepatocytes and proximal tubules and involved in the uptake and disposition of cationic compounds by hepatic and renal clearance from the blood flow. Most likely functions as an uptake carrier in enterocytes contributing to the intestinal elimination of organic cations from the systemic circulation. Transports endogenous monoamines such as N-1-methylnicotinamide (NMN), guanidine, histamine, neurotransmitters dopamine, serotonin and adrenaline. Also transports natural polyamines such as spermidine, agmatine and putrescine at low affinity, but relatively high turnover. Involved in the hepatic uptake of vitamin B1/thiamine, hence regulating hepatic lipid and energy metabolism. Mediates the bidirectional transport of acetylcholine (ACh) at the apical membrane of ciliated cell in airway epithelium, thereby playing a role in luminal release of ACh from bronchial epithelium. Transports dopaminergic neuromodulators cyclo(his-pro) and salsolinol with lower efficency. Also capable of transporting non-amine endogenous compounds such as prostaglandin E2 (PGE2) and prostaglandin F2-alpha (PGF2-alpha). May contribute to the transport of cationic compounds in testes across the blood-testis-barrier. Also involved in the uptake of xenobiotics tributylmethylammonium (TBuMA), quinidine, N-methyl-quinine (NMQ), N-methyl-quinidine (NMQD) N-(4,4-azo-n-pentyl)-quinuclidine (APQ), azidoprocainamide methoiodide (AMP), N-(4,4-azo-n-pentyl)-21-deoxyajmalinium (APDA) and 4-(4-(dimethylamino)styryl)-N-methylpyridinium (ASP). Mediates the uptake of 1-methyl-4-phenylpyridinium (MPP(+)). Functionally, not able to uptake 1-methyl-4-phenylpyridinium (MPP(+)). This is Solute carrier family 22 member 1 from Homo sapiens (Human).